Reading from the N-terminus, the 527-residue chain is Glutamate--cysteine ligase (527 aa).

The protein belongs to the glutamate--cysteine ligase type 1 family. Type 1 subfamily.

The enzyme catalyses L-cysteine + L-glutamate + ATP = gamma-L-glutamyl-L-cysteine + ADP + phosphate + H(+). Its pathway is sulfur metabolism; glutathione biosynthesis; glutathione from L-cysteine and L-glutamate: step 1/2. The chain is Glutamate--cysteine ligase from Bordetella parapertussis (strain 12822 / ATCC BAA-587 / NCTC 13253).